The sequence spans 232 residues: 5'-methylthioadenosine/S-adenosylhomocysteine nucleosidase (232 aa).

Glutamate 14 (proton acceptor) is an active-site residue. Substrate is bound by residues glycine 80, valine 154, and 175–176; that span reads ME. Aspartate 199 acts as the Proton donor in catalysis.

This sequence belongs to the PNP/UDP phosphorylase family. MtnN subfamily.

The catalysed reaction is S-adenosyl-L-homocysteine + H2O = S-(5-deoxy-D-ribos-5-yl)-L-homocysteine + adenine. It carries out the reaction S-methyl-5'-thioadenosine + H2O = 5-(methylsulfanyl)-D-ribose + adenine. The enzyme catalyses 5'-deoxyadenosine + H2O = 5-deoxy-D-ribose + adenine. The protein operates within amino-acid biosynthesis; L-methionine biosynthesis via salvage pathway; S-methyl-5-thio-alpha-D-ribose 1-phosphate from S-methyl-5'-thioadenosine (hydrolase route): step 1/2. Functionally, catalyzes the irreversible cleavage of the glycosidic bond in both 5'-methylthioadenosine (MTA) and S-adenosylhomocysteine (SAH/AdoHcy) to adenine and the corresponding thioribose, 5'-methylthioribose and S-ribosylhomocysteine, respectively. Also cleaves 5'-deoxyadenosine, a toxic by-product of radical S-adenosylmethionine (SAM) enzymes, into 5-deoxyribose and adenine. The sequence is that of 5'-methylthioadenosine/S-adenosylhomocysteine nucleosidase from Haemophilus ducreyi (strain 35000HP / ATCC 700724).